Consider the following 337-residue polypeptide: Eukaryotic translation initiation factor 3 subunit H (337 aa).

One can recognise an MPN domain in the interval 21–153 (VQCDGLAVMK…LKAYRLTPQA (133 aa)).

The protein belongs to the eIF-3 subunit H family. Component of the eukaryotic translation initiation factor 3 (eIF-3) complex. The eIF-3 complex interacts with pix. Interacts with mxt.

It localises to the cytoplasm. In terms of biological role, component of the eukaryotic translation initiation factor 3 (eIF-3) complex, which is involved in protein synthesis of a specialized repertoire of mRNAs and, together with other initiation factors, stimulates binding of mRNA and methionyl-tRNAi to the 40S ribosome. The eIF-3 complex specifically targets and initiates translation of a subset of mRNAs involved in cell proliferation. This chain is Eukaryotic translation initiation factor 3 subunit H, found in Drosophila willistoni (Fruit fly).